Reading from the N-terminus, the 214-residue chain is Attacin (214 aa).

Positions 1–19 (MSKSVALLLLCACLASGRH) are cleaved as a signal peptide. Positions 20 to 26 (VPTRARR) are excised as a propeptide.

This sequence belongs to the attacin/sarcotoxin-2 family. As to expression, highest expression in fat body and hemocytes and to a much lesser extent in Malpighian tubules, silk gland and midgut.

It is found in the secreted. Its function is as follows. Hemolymph antibacterial protein. Has a wide spectrum of activity against both Gram-positive and Gram-negative bacteria. The sequence is that of Attacin from Bombyx mori (Silk moth).